Here is a 644-residue protein sequence, read N- to C-terminus: Low affinity sulfate transporter 3 (644 aa).

A compositionally biased stretch (polar residues) spans 1–19 (MSSLGTEQFSERSQWVLNS). The segment at 1-20 (MSSLGTEQFSERSQWVLNSP) is disordered. The next 13 helical transmembrane spans lie at 50 to 70 (AVSFLASLFPILSWIRTYSAT), 76 to 96 (LLSGLTLASLSIPQSIGYANL), 99 to 119 (LDPQYGLYTSVIPPVIYALMG), 124 to 144 (IAIGPVAVVSMLLSSLVPKVI), 156 to 176 (LVFTVTLFAGIFQTAFGVLRL), 179 to 199 (LVDFLSHAALVGFMAGAAIVI), 242 to 262 (PLNFVIGCSFLIFLLAARFIG), 268 to 288 (FFWLPAIAPLLSVILSTLIVF), 328 to 348 (IGLISAIIALTEAIAVGRSFA), 394 to 414 (CKTAVSNIVMAVTVLLCLELF), 418 to 438 (LYYTPMAILASIILSALPGLI), 455 to 475 (LACLGAFFGVLFVSIEIGLLI), and 518 to 538 (PGILVIRISSGSLCFANAGFV). Positions 511–635 (YPMAVTTPGI…LTVAEAVDAC (125 aa)) constitute an STAS domain.

It belongs to the SLC26A/SulP transporter (TC 2.A.53) family.

It is found in the membrane. Low-affinity H(+)/sulfate cotransporter which may be involved in the internal transport of sulfate between cellular or subcellular compartments within the plant. This chain is Low affinity sulfate transporter 3 (ST3), found in Stylosanthes hamata (Caribbean stylo).